The chain runs to 957 residues: Calsyntenin-3 (957 aa).

Residues 1–19 (MTPLLFPLLLASLLPSSSC) form the signal peptide. Residues 20-848 (NKANKHKPWI…SHRNSMVPSA (829 aa)) lie on the Extracellular side of the membrane. Cadherin domains follow at residues 29 to 145 (IEAE…APVF) and 146 to 246 (VERL…KPSW). 3 N-linked (GlcNAc...) asparagine glycosylation sites follow: N299, N347, and N508. Residues 849–869 (ATLIIVVCVGFLVLMVVLGLV) traverse the membrane as a helical segment. Residues 870–957 (RIHSLHRRVS…RIIETPPHRY (88 aa)) are Cytoplasmic-facing. The segment at 919 to 957 (CVAGAAGGQQDDEDSSDSEAADSPSSDERRIIETPPHRY) is disordered. Residues 928-938 (QDDEDSSDSEA) are compositionally biased toward acidic residues. A compositionally biased stretch (basic and acidic residues) spans 944-957 (SDERRIIETPPHRY).

This sequence belongs to the calsyntenin family. Interacts (via cadherin domains) with both alpha and beta isoforms of neurexins (NRXN1, NRXN2 and NRXN3). Directly interacts with APBA2. Forms a tripartite complex with APBA2 and APP. Interacts with low affinity with KLC1. Interacts with SLC23A2/SVCT2. Post-translationally, proteolytically processed under normal cellular conditions. A primary zeta-cleavage generates a large extracellular (soluble) N-terminal domain (sAlc) and a short C-terminal transmembrane fragment (CTF1). A secondary cleavage catalyzed by gamma-secretase within the transmembrane domain releases the beta-Alc-beta chain in the extracellular milieu and produces an intracellular fragment (AlcICD). This processing is strongly suppressed in the tripartite complex formed with APBA2 and APP, which seems to prevent the association with gamma-secretase.

The protein resides in the postsynaptic cell membrane. The protein localises to the endoplasmic reticulum membrane. It localises to the golgi apparatus membrane. It is found in the cell projection. Its subcellular location is the dendrite. Postsynaptic adhesion molecule that binds to presynaptic neurexins to mediate both excitatory and inhibitory synapse formation. Promotes synapse development by acting as a cell adhesion molecule at the postsynaptic membrane, which associates with both neurexin-alpha and neurexin-beta proteins at the presynaptic membrane. Regulates the balance between excitatory and inhibitory synapses by inhibiting formation of excitatory parallel-fiber synapses and promoting formation of inhibitory synapses in the same neuron. May also be involved in ascorbate (vitamin C) uptake via its interaction with SLC23A2/SVCT2. Complex formation with APBA2 and APP, stabilizes APP metabolism and enhances APBA2-mediated suppression of beta-APP40 secretion, due to the retardation of intracellular APP maturation. The polypeptide is Calsyntenin-3 (CLSTN3) (Bos taurus (Bovine)).